We begin with the raw amino-acid sequence, 357 residues long: MIEQQKRKGPELPLVPVKRQRHELLLGAGSGPGAGQQQATPGALLQAGPPRCSSLQAPIMLLSGHEGEVYCCKFHPNGSTLASAGFDRLILLWNVYGDCGNYATLKGYSGAVMELHYNTDGSMLFSASTDKTVAVWDSETGERVKRLKGHTSFVNSCYPARRGPQLVCTGSDDGTVKLWDIRKKAAIQTFQNTYQVLAVTFNDTSDQIISGGIDNDIKVWDLRQNKLTYTMRGHADSVTGLSLSSEGSYLLSNAMDNTVRVWDVRPFAPKERCVKIFQGNVHNFEKNLLRCSWSPDGSKIAAGSADRSVCVWDTTSRRILYKLPGHAGSINEVAFHPDEPIIISASSDKRLYMGEIQ.

A Glycyl lysine isopeptide (Lys-Gly) (interchain with G-Cter in SUMO2) cross-link involves residue lysine 18. Asymmetric dimethylarginine is present on arginine 21. WD repeat units follow at residues glycine 64–alanine 103, glycine 107–arginine 146, glycine 149–threonine 189, glutamine 191–threonine 230, glycine 233–arginine 272, asparagine 283–lysine 322, and glycine 325–glutamine 357. Residue lysine 270 forms a Glycyl lysine isopeptide (Lys-Gly) (interchain with G-Cter in SUMO2) linkage.

As to quaternary structure, component of the pre-catalytic and catalytic spliceosome complexes. Component of the postcatalytic spliceosome P complex. Part of the U5 snRNP complex. Interacts with PRPF8. Component of the U4/U6-U5 tri-snRNP complex composed of the U4, U6 and U5 snRNAs and at least PRPF3, PRPF4, PRPF6, PRPF8, PRPF31, SNRNP200, TXNL4A, WDR57, SNRNP40, DDX23, CD2BP2, PPIH, SNU13, EFTUD2, SART1 and USP39. Component of the minor spliceosome, which splices U12-type introns.

Its subcellular location is the nucleus. Its function is as follows. Required for pre-mRNA splicing as component of the activated spliceosome. Component of the U5 small nuclear ribonucleoprotein (snRNP) complex and the U4/U6-U5 tri-snRNP complex, building blocks of the spliceosome. As a component of the minor spliceosome, involved in the splicing of U12-type introns in pre-mRNAs. The protein is U5 small nuclear ribonucleoprotein 40 kDa protein (SNRNP40) of Pongo abelii (Sumatran orangutan).